Here is a 217-residue protein sequence, read N- to C-terminus: Chorionic somatomammotropin hormone 2 (217 aa).

Residues 1–26 form the signal peptide; it reads MAAGSRTSLLLAFALLCLPWLQEAGA. Residue H44 coordinates Zn(2+). Cysteines 79 and 191 form a disulfide. E200 lines the Zn(2+) pocket. C208 and C215 are disulfide-bonded.

This sequence belongs to the somatotropin/prolactin family. Can be found in a monomeric as well as dimeric form.

Its subcellular location is the secreted. Its function is as follows. Produced only during pregnancy and is involved in stimulating lactation, fetal growth and metabolism. Does not interact with GHR but only activates PRLR through zinc-induced dimerization. The polypeptide is Chorionic somatomammotropin hormone 2 (CSH2) (Homo sapiens (Human)).